The primary structure comprises 351 residues: Methylthioribose-1-phosphate isomerase (351 aa).

Substrate contacts are provided by residues 51–53, Arg94, and Gln199; that span reads RGA. Asp240 functions as the Proton donor in the catalytic mechanism. Residue 250-251 coordinates substrate; it reads NK.

The protein belongs to the EIF-2B alpha/beta/delta subunits family. MtnA subfamily. Homodimer.

The enzyme catalyses 5-(methylsulfanyl)-alpha-D-ribose 1-phosphate = 5-(methylsulfanyl)-D-ribulose 1-phosphate. The protein operates within amino-acid biosynthesis; L-methionine biosynthesis via salvage pathway; L-methionine from S-methyl-5-thio-alpha-D-ribose 1-phosphate: step 1/6. In terms of biological role, catalyzes the interconversion of methylthioribose-1-phosphate (MTR-1-P) into methylthioribulose-1-phosphate (MTRu-1-P). The protein is Methylthioribose-1-phosphate isomerase of Bacillus anthracis.